A 448-amino-acid polypeptide reads, in one-letter code: SET domain-containing protein SmydA-8, isoform B (448 aa).

Residues 42–273 (PSWRVADSPI…AGAEITMSYA (232 aa)) form the SET domain.

Belongs to the class V-like SAM-binding methyltransferase superfamily.

In Drosophila melanogaster (Fruit fly), this protein is SET domain-containing protein SmydA-8, isoform B.